We begin with the raw amino-acid sequence, 361 residues long: Lipoyl synthase 1, chloroplastic (361 aa).

The [4Fe-4S] cluster site is built by C87, C92, C98, C124, C128, C131, and S339. The Radical SAM core domain maps to 107–328 (GEGDGIATAT…KEYGESVGFR (222 aa)).

The protein belongs to the radical SAM superfamily. Lipoyl synthase family. It depends on [4Fe-4S] cluster as a cofactor.

It is found in the plastid. The protein localises to the chloroplast. The enzyme catalyses [[Fe-S] cluster scaffold protein carrying a second [4Fe-4S](2+) cluster] + N(6)-octanoyl-L-lysyl-[protein] + 2 oxidized [2Fe-2S]-[ferredoxin] + 2 S-adenosyl-L-methionine + 4 H(+) = [[Fe-S] cluster scaffold protein] + N(6)-[(R)-dihydrolipoyl]-L-lysyl-[protein] + 4 Fe(3+) + 2 hydrogen sulfide + 2 5'-deoxyadenosine + 2 L-methionine + 2 reduced [2Fe-2S]-[ferredoxin]. The protein operates within protein modification; protein lipoylation via endogenous pathway; protein N(6)-(lipoyl)lysine from octanoyl-[acyl-carrier-protein]: step 2/2. In terms of biological role, catalyzes the radical-mediated insertion of two sulfur atoms into the C-6 and C-8 positions of the octanoyl moiety bound to the lipoyl domains of lipoate-dependent enzymes, thereby converting the octanoylated domains into lipoylated derivatives. The polypeptide is Lipoyl synthase 1, chloroplastic (Zea mays (Maize)).